Here is a 403-residue protein sequence, read N- to C-terminus: Basic leucine zipper 25 (403 aa).

2 disordered regions span residues 13–128 (SFWP…APVV) and 156–259 (VKPE…EFDT). Over residues 24-33 (PGSSSTPSPT) the composition is skewed to low complexity. Residues 56 to 69 (LSGSDSSPTTNTIE) show a composition bias toward polar residues. 2 stretches are compositionally biased toward low complexity: residues 115–128 (APSS…APVV) and 161–174 (SSAS…AQGS). Residues 175–195 (IVAQTSPGASSVRFSPTTSTQ) show a composition bias toward polar residues. Residues 212 to 226 (DSDDDDLDGDADNGD) are compositionally biased toward acidic residues. Serine 213 carries the post-translational modification Phosphoserine. In terms of domain architecture, bZIP spans 229 to 292 (DVKRARRMLS…DAAAVDNRIL (64 aa)). Positions 231–250 (KRARRMLSNRESARRSRRRK) are basic motif. Residues 233–240 (ARRMLSNR) carry the Nuclear localization signal motif. A leucine-zipper region spans residues 264-271 (LRAEHSTL). A compositionally biased stretch (low complexity) spans 332 to 345 (NTPSASSSIPPNSN). 2 disordered regions span residues 332 to 361 (NTPS…SAGL) and 380 to 403 (EGMQ…NHKH). Residues 351–361 (ANSSTNTSAGL) are compositionally biased toward polar residues.

It belongs to the bZIP family. In terms of assembly, homodimer. Forms a heterodimer with BZIP1, BZIP1, BZIP2, BZIP9, BZIP11, BZIP44, BZIP53 and BZIP63. Interacts with ABI3 and forms a complex made of ABI3, BZIP53 and BZIP25. In terms of tissue distribution, expressed in roots, shoots, stems, leaves, stipulae, siliques, seeds, pollen, and flowers.

The protein localises to the nucleus. Its function is as follows. Transcription factor that binds to the 5'-ACGT-3' box, especially present in G-box-like motif (5'-CCACGTGGCC-3'), ABRE elements, of seed storage protein (SSP) encoding gene promoters (e.g. At2S and CRU3) and promotes their expression in seeds when in complex with ABI3 and BZIP53. The sequence is that of Basic leucine zipper 25 (BZIP25) from Arabidopsis thaliana (Mouse-ear cress).